Reading from the N-terminus, the 473-residue chain is Reticulon-4 receptor (473 aa).

The N-terminal stretch at 1–26 (MKRASAGGSRLLAWVLWLQAWQVAAP) is a signal peptide. Cystine bridges form between cysteine 27/cysteine 33 and cysteine 31/cysteine 43. The LRRNT domain occupies 27–54 (CPGACVCYNEPKVTTSCPQQGLQAVPVG). LRR repeat units lie at residues 55-79 (IPAASQRIFLHGNRISHVPAASFRA), 81-103 (RNLTILWLHSNVLARIDAAAFTG), 104-128 (LALLEQLDLSDNAQLRSVDPATFHG), 129-152 (LGRLHTLHLDRCGLQELGPGLFRG), 153-176 (LAALQYLYLQDNALQALPDDTFRD), 178-200 (GNLTHLFLHGNRISSVPERAFRG), 202-224 (HSLDRLLLHQNRVAHVHPHAFRD), 225-248 (LGRLMTLYLFANNLSALPTEALAP), and 250-273 (RALQYLRLNDNPWVCDCRARPLWA). Asparagine 82 is a glycosylation site (N-linked (GlcNAc...) asparagine). Asparagine 179 carries N-linked (GlcNAc...) asparagine glycosylation. One can recognise an LRRCT domain in the interval 260 to 310 (NPWVCDCRARPLWAWLQKFRGSSSEVPCSLPQRLAGRDLKRLAANDLQGCA). Intrachain disulfides connect cysteine 264-cysteine 287, cysteine 266-cysteine 335, and cysteine 309-cysteine 336. Residues 346-447 (VLEPGRPASA…GGGTGDSEGS (102 aa)) form a disordered region. Basic residues predominate over residues 413–429 (PRRRPGCSRKNRTRSHC). Positions 434 to 445 (AGSGGGGTGDSE) are enriched in gly residues. Serine 447 is lipidated: GPI-anchor amidated serine. A propeptide spans 448–473 (GALPSLTCSLTPLGLALVLWTVLGPC) (removed in mature form).

The protein belongs to the Nogo receptor family. Homodimer. Interacts with MAG. Interacts with RTN4. Interacts with NGFR. Interacts with LINGO1. Interacts with KIAA0319L. Interacts with OLFM1; this inhibits interaction with LINGO1 and NGFR. Interacts with OMG. Post-translationally, N-glycosylated. O-glycosylated. Contains terminal sialic acid groups on its glycan chains. In terms of tissue distribution, widespread in the brain but highest levels in the gray matter. Low levels in heart and kidney; not expressed in oligodendrocytes (white matter).

The protein resides in the cell membrane. Its subcellular location is the membrane raft. It localises to the cell projection. The protein localises to the dendrite. It is found in the axon. The protein resides in the perikaryon. Receptor for RTN4, OMG and MAG. Functions as a receptor for the sialylated gangliosides GT1b and GM1. Besides, functions as a receptor for chondroitin sulfate proteoglycans. Can also bind heparin. Intracellular signaling cascades are triggered via the coreceptor NGFR. Signaling mediates activation of Rho and downstream reorganization of the actin cytoskeleton. Mediates axonal growth inhibition. Plays a role in regulating axon regeneration and neuronal plasticity in the adult central nervous system. Plays a role in postnatal brain development. Required for normal axon migration across the brain midline and normal formation of the corpus callosum. Protects motoneurons against apoptosis; protection against apoptosis is probably mediated via interaction with MAG. Acts in conjunction with RTN4 and LINGO1 in regulating neuronal precursor cell motility during cortical development. Like other family members, plays a role in restricting the number dendritic spines and the number of synapses that are formed during brain development. The sequence is that of Reticulon-4 receptor (RTN4R) from Homo sapiens (Human).